Here is a 144-residue protein sequence, read N- to C-terminus: Nucleoside diphosphate kinase (144 aa).

6 residues coordinate ATP: Lys-11, Phe-59, Arg-87, Thr-93, Arg-104, and Asn-114. His-117 serves as the catalytic Pros-phosphohistidine intermediate.

This sequence belongs to the NDK family. Homotetramer. Mg(2+) is required as a cofactor.

It is found in the cytoplasm. The catalysed reaction is a 2'-deoxyribonucleoside 5'-diphosphate + ATP = a 2'-deoxyribonucleoside 5'-triphosphate + ADP. It catalyses the reaction a ribonucleoside 5'-diphosphate + ATP = a ribonucleoside 5'-triphosphate + ADP. Major role in the synthesis of nucleoside triphosphates other than ATP. The ATP gamma phosphate is transferred to the NDP beta phosphate via a ping-pong mechanism, using a phosphorylated active-site intermediate. This chain is Nucleoside diphosphate kinase, found in Aliivibrio fischeri (strain ATCC 700601 / ES114) (Vibrio fischeri).